We begin with the raw amino-acid sequence, 492 residues long: Aerolysin-3 (492 aa).

A signal peptide spans 1–23; it reads MKKLKITGLSLIISGLLMAQAQA. 2 cysteine pairs are disulfide-bonded: C42–C98 and C182–C187. Residues 68–84 form an interaction with host N-linked glycan region; the sequence is WQISGLANGWVIMGPGY. Residues 256–288 are part of the transmembrane beta-barrel after proteolytic activation of the toxin and insertion into the host membrane; sequence YGLSEKVTTKNKFKWPLVGETELSIEIAANQSW. Positions 346–355 are interaction with glycans from host GPI-anchor; that stretch reads RWGGNAWYTH. Positions 446 to 492 are excised as a propeptide; that stretch reads AAASHSSRARNLSAGQGLRLEIPLDAQELSGLGFNNVSLSVTPAANQ.

The protein belongs to the aerolysin family. In terms of assembly, homodimer in solution; homoheptamer in the host membrane. After binding to GPI-anchored proteins in target membranes and proteolytic removal of the C-terminal propeptide, the protein assembles into a heptameric pre-pore complex. A further conformation change leads to insertion into the host membrane. Post-translationally, proteolytic cleavage and subsequent release of the propeptide trigger a major conformation change, leading to the formation of a heptameric pre-pore that then inserts into the host membrane.

The protein localises to the secreted. It localises to the host cell membrane. In terms of biological role, secreted, cytolytic toxin that forms pores in host membranes after proteolytic removal of a C-terminal propeptide, leading to destruction of the membrane permeability barrier and cell death. The pores are formed by transmembrane beta-strands and are approximately 3 nm in diameter. The polypeptide is Aerolysin-3 (ahh3) (Aeromonas hydrophila).